A 179-amino-acid chain; its full sequence is Large ribosomal subunit protein uL6 (179 aa).

The protein belongs to the universal ribosomal protein uL6 family. Part of the 50S ribosomal subunit.

This protein binds to the 23S rRNA, and is important in its secondary structure. It is located near the subunit interface in the base of the L7/L12 stalk, and near the tRNA binding site of the peptidyltransferase center. The protein is Large ribosomal subunit protein uL6 of Syntrophotalea carbinolica (strain DSM 2380 / NBRC 103641 / GraBd1) (Pelobacter carbinolicus).